The following is a 594-amino-acid chain: Alpha-1,4-glucan:maltose-1-phosphate maltosyltransferase (594 aa).

The interval 244-270 (NRKGRNNSLTPGPDDPGSPYAIGSEEG) is disordered. Residues Lys-246, Gln-306, and Asp-341 each contribute to the alpha-maltose 1-phosphate site. Asp-377 functions as the Nucleophile in the catalytic mechanism. Asn-378 is an alpha-maltose 1-phosphate binding site. The active-site Proton donor is Glu-406. 517–518 (KY) serves as a coordination point for alpha-maltose 1-phosphate.

It belongs to the glycosyl hydrolase 13 family. GlgE subfamily. In terms of assembly, homodimer.

The catalysed reaction is alpha-maltose 1-phosphate + [(1-&gt;4)-alpha-D-glucosyl](n) = [(1-&gt;4)-alpha-D-glucosyl](n+2) + phosphate. Maltosyltransferase that uses maltose 1-phosphate (M1P) as the sugar donor to elongate linear or branched alpha-(1-&gt;4)-glucans. Is involved in a branched alpha-glucan biosynthetic pathway from trehalose, together with TreS, Mak and GlgB. This Cereibacter sphaeroides (Rhodobacter sphaeroides) protein is Alpha-1,4-glucan:maltose-1-phosphate maltosyltransferase.